A 207-amino-acid chain; its full sequence is Thymidylate kinase (207 aa).

10–17 (GIEGSGKS) contacts ATP.

It belongs to the thymidylate kinase family.

The catalysed reaction is dTMP + ATP = dTDP + ADP. Functionally, phosphorylation of dTMP to form dTDP in both de novo and salvage pathways of dTTP synthesis. This Halothermothrix orenii (strain H 168 / OCM 544 / DSM 9562) protein is Thymidylate kinase.